A 668-amino-acid polypeptide reads, in one-letter code: UvrABC system protein B (668 aa).

The Helicase ATP-binding domain maps to 27–413 (AGVQAGHRFQ…STQVVEQIIR (387 aa)). 40–47 (GATGTGKT) contributes to the ATP binding site. Residues 93 to 116 (YYDYYQPEAYIPVTDTYIEKSASI) carry the Beta-hairpin motif. The region spanning 430-596 (QVDDLYGEIR…PIVKKTSNAI (167 aa)) is the Helicase C-terminal domain. The UVR domain occupies 628 to 663 (PPLIQDLEAKMKAAAQELAFEEAARYRDQIKRLRDR).

The protein belongs to the UvrB family. Forms a heterotetramer with UvrA during the search for lesions. Interacts with UvrC in an incision complex.

Its subcellular location is the cytoplasm. The UvrABC repair system catalyzes the recognition and processing of DNA lesions. A damage recognition complex composed of 2 UvrA and 2 UvrB subunits scans DNA for abnormalities. Upon binding of the UvrA(2)B(2) complex to a putative damaged site, the DNA wraps around one UvrB monomer. DNA wrap is dependent on ATP binding by UvrB and probably causes local melting of the DNA helix, facilitating insertion of UvrB beta-hairpin between the DNA strands. Then UvrB probes one DNA strand for the presence of a lesion. If a lesion is found the UvrA subunits dissociate and the UvrB-DNA preincision complex is formed. This complex is subsequently bound by UvrC and the second UvrB is released. If no lesion is found, the DNA wraps around the other UvrB subunit that will check the other stand for damage. In Thermosynechococcus vestitus (strain NIES-2133 / IAM M-273 / BP-1), this protein is UvrABC system protein B.